A 243-amino-acid polypeptide reads, in one-letter code: Ion-translocating oxidoreductase complex subunit E (243 aa).

Transmembrane regions (helical) follow at residues 40 to 60 (LGMG…ISAL), 72 to 92 (AFIL…NAWL), 94 to 114 (DLHK…AILG), 129 to 149 (ALDG…VGAI), 152 to 172 (ILGS…HFAF), and 183 to 203 (GFLI…LFAL).

Belongs to the NqrDE/RnfAE family. As to quaternary structure, the complex is composed of six subunits: RnfA, RnfB, RnfC, RnfD, RnfE and RnfG.

The protein resides in the cellular chromatophore membrane. Its function is as follows. Part of a membrane-bound complex that couples electron transfer with translocation of ions across the membrane. Required for nitrogen fixation. Involved in electron transfer to nitrogenase. The protein is Ion-translocating oxidoreductase complex subunit E of Rhodobacter capsulatus (Rhodopseudomonas capsulata).